Reading from the N-terminus, the 447-residue chain is MSTMTPAEIVSELDKHIIGQAKAKKAVAVALRNRWRRQQVGEPLRQEITPKNILMIGPTGVGKTEIARRLAKLADAPFVKIEATKFTEVGYVGRDVDSIVRDLIEISVKQTREAEMRKVRTKATDQAEDRILDVLLPQPRAVGFGGNADHANDDNNATRQTFRKRLREGQLDDKEVELDLEQPSAGMDIMAPPGMEEMTEQIRSMFSNLGSGKKQRRKVKIKEALKLLTDEEAAKMLNDEEVKTKAVQNVEQNGIVFLDEIDKITSRNNEGSGGEVSRQGVQRDLLPLVEGTTVNTKYGMVKTDHILFIASGAFHLAKPSDLIPELQGRFPIRVELDSLSVEDFEAILDATDASLVKQYQALLATEDVQLEFAADGIRRLAEIAYAVNEKTENIGARRLYTVIEKLLEEVSFSAGNHAGERVTIDAKYVEHALGEVSQDEDLSRYVL.

ATP-binding positions include Ile-18, 60 to 65, Asp-259, Glu-325, and Arg-397; that span reads GVGKTE.

Belongs to the ClpX chaperone family. HslU subfamily. In terms of assembly, a double ring-shaped homohexamer of HslV is capped on each side by a ring-shaped HslU homohexamer. The assembly of the HslU/HslV complex is dependent on binding of ATP.

It localises to the cytoplasm. Its function is as follows. ATPase subunit of a proteasome-like degradation complex; this subunit has chaperone activity. The binding of ATP and its subsequent hydrolysis by HslU are essential for unfolding of protein substrates subsequently hydrolyzed by HslV. HslU recognizes the N-terminal part of its protein substrates and unfolds these before they are guided to HslV for hydrolysis. The polypeptide is ATP-dependent protease ATPase subunit HslU (Burkholderia ambifaria (strain ATCC BAA-244 / DSM 16087 / CCUG 44356 / LMG 19182 / AMMD) (Burkholderia cepacia (strain AMMD))).